The sequence spans 829 residues: Receptor-type tyrosine-protein phosphatase alpha (829 aa).

The signal sequence occupies residues 1 to 19; sequence MDSWFILVLFGSGLIHVSA. The Extracellular segment spans residues 20–142; the sequence is NNATTVSPSL…ETFPPADETP (123 aa). Residues Asn21, Asn47, Asn51, Asn68, Asn80, Asn86, Asn104, and Asn124 are each glycosylated (N-linked (GlcNAc...) asparagine). A disordered region spans residues 79–106; it reads VNSSHSDNGTRRAASTESGGTTISPNGS. The chain crosses the membrane as a helical span at residues 143–166; that stretch reads IIAVMVALSSLLVIVFIIIVLYML. Residues 167 to 829 are Cytoplasmic-facing; that stretch reads RFKKYKQAGS…DAFSDYANFK (663 aa). 2 positions are modified to phosphoserine: Ser202 and Ser204. 2 consecutive Tyrosine-protein phosphatase domains span residues 232–528 and 560–818; these read FREE…LLEH and LEEE…VQEY. Residues Asp437, 469–475, and Gln513 contribute to the substrate site; that span reads CSAGVGR. Residue Cys469 is the Phosphocysteine intermediate of the active site. The active-site Phosphocysteine intermediate is the Cys759. A Phosphotyrosine modification is found at Tyr825.

The protein belongs to the protein-tyrosine phosphatase family. Receptor class 4 subfamily. In terms of assembly, part of a complex comprised of PTPRA, BCAR1, BCAR3 (via SH2 domain), and SRC. Within the complex, interacts (when phosphorylated on Tyr-825) with BCAR3 (via SH2 domain). Interacts with GRB2. In terms of processing, integrin binding to extracellular matrix induces phosphorylation at Tyr-825 which induces PTPRA localization and recruitment of BCAR3, BCAR1 and CRK to focal adhesions. Widely expressed. Highest expression in brain and kidney.

Its subcellular location is the cell membrane. The protein resides in the cell junction. It is found in the focal adhesion. It catalyses the reaction O-phospho-L-tyrosyl-[protein] + H2O = L-tyrosyl-[protein] + phosphate. Its function is as follows. Tyrosine protein phosphatase which is involved in integrin-mediated focal adhesion formation. Following integrin engagement, specifically recruits BCAR3, BCAR1 and CRK to focal adhesions thereby promoting SRC-mediated phosphorylation of BRAC1 and the subsequent activation of PAK and small GTPase RAC1 and CDC42. The sequence is that of Receptor-type tyrosine-protein phosphatase alpha (Ptpra) from Mus musculus (Mouse).